We begin with the raw amino-acid sequence, 435 residues long: Adenylosuccinate synthetase (435 aa).

Residues 17–23 (GDEGKGK) and 45–47 (GHT) contribute to the GTP site. Asp18 acts as the Proton acceptor in catalysis. Mg(2+)-binding residues include Asp18 and Gly45. Residues 18–21 (DEGK), 43–46 (NAGH), Thr134, Arg148, Gln229, Thr244, and Arg308 contribute to the IMP site. The active-site Proton donor is the His46. Residue 304–310 (SVTGRPR) coordinates substrate. Residues Arg310, 336–338 (KLD), and 418–420 (STG) each bind GTP.

Belongs to the adenylosuccinate synthetase family. Homodimer. Mg(2+) is required as a cofactor.

Its subcellular location is the cytoplasm. The enzyme catalyses IMP + L-aspartate + GTP = N(6)-(1,2-dicarboxyethyl)-AMP + GDP + phosphate + 2 H(+). It functions in the pathway purine metabolism; AMP biosynthesis via de novo pathway; AMP from IMP: step 1/2. Plays an important role in the de novo pathway of purine nucleotide biosynthesis. Catalyzes the first committed step in the biosynthesis of AMP from IMP. This is Adenylosuccinate synthetase from Bordetella parapertussis (strain 12822 / ATCC BAA-587 / NCTC 13253).